Reading from the N-terminus, the 637-residue chain is Threonine--tRNA ligase (637 aa).

The TGS domain occupies 1–61 (MIKVTLKDGK…DKDCNLEILT (61 aa)). The tract at residues 242–532 (DHRKIGKELD…LIEHYAGAFP (291 aa)) is catalytic. Positions 333, 384, and 509 each coordinate Zn(2+).

The protein belongs to the class-II aminoacyl-tRNA synthetase family. As to quaternary structure, homodimer. Zn(2+) is required as a cofactor.

The protein localises to the cytoplasm. It carries out the reaction tRNA(Thr) + L-threonine + ATP = L-threonyl-tRNA(Thr) + AMP + diphosphate + H(+). Its function is as follows. Catalyzes the attachment of threonine to tRNA(Thr) in a two-step reaction: L-threonine is first activated by ATP to form Thr-AMP and then transferred to the acceptor end of tRNA(Thr). Also edits incorrectly charged L-seryl-tRNA(Thr). This is Threonine--tRNA ligase from Clostridium acetobutylicum (strain ATCC 824 / DSM 792 / JCM 1419 / IAM 19013 / LMG 5710 / NBRC 13948 / NRRL B-527 / VKM B-1787 / 2291 / W).